The following is a 421-amino-acid chain: Trimethyllysine dioxygenase, mitochondrial (421 aa).

The transit peptide at 1 to 15 (MWYHKLLHQQSRLRN) directs the protein to the mitochondrion. N6-acetyllysine occurs at positions 179 and 236. Residues histidine 242, aspartate 244, and histidine 389 each coordinate Fe cation.

This sequence belongs to the gamma-BBH/TMLD family. In terms of assembly, homodimer. The cofactor is Fe(2+). Requires L-ascorbate as cofactor.

Its subcellular location is the mitochondrion matrix. The enzyme catalyses N(6),N(6),N(6)-trimethyl-L-lysine + 2-oxoglutarate + O2 = (3S)-3-hydroxy-N(6),N(6),N(6)-trimethyl-L-lysine + succinate + CO2. It functions in the pathway amine and polyamine biosynthesis; carnitine biosynthesis. Functionally, converts trimethyllysine (TML) into hydroxytrimethyllysine (HTML). In Mus musculus (Mouse), this protein is Trimethyllysine dioxygenase, mitochondrial (Tmlhe).